The chain runs to 190 residues: Superoxide dismutase [Cu-Zn] (190 aa).

The first 23 residues, 1-23 (MKLTNLALAFTLFGASAVAFAHA), serve as a signal peptide directing secretion. His83, His85, and His108 together coordinate Cu cation. Residues Cys90 and Cys186 are joined by a disulfide bond. Zn(2+) is bound by residues His108, His117, His126, and Asp129. Residues 162–181 (MIHEGGDNHSDHPAPLGGGG) are disordered. His164 contacts Cu cation.

It belongs to the Cu-Zn superoxide dismutase family. In terms of assembly, homodimer. Requires Cu cation as cofactor. It depends on Zn(2+) as a cofactor.

It localises to the periplasm. The catalysed reaction is 2 superoxide + 2 H(+) = H2O2 + O2. In terms of biological role, destroys radicals which are normally produced within the cells and which are toxic to biological systems. The sequence is that of Superoxide dismutase [Cu-Zn] (sodC) from Actinobacillus pleuropneumoniae (Haemophilus pleuropneumoniae).